Here is a 76-residue protein sequence, read N- to C-terminus: Exodeoxyribonuclease 7 small subunit (76 aa).

The protein belongs to the XseB family. As to quaternary structure, heterooligomer composed of large and small subunits.

Its subcellular location is the cytoplasm. The enzyme catalyses Exonucleolytic cleavage in either 5'- to 3'- or 3'- to 5'-direction to yield nucleoside 5'-phosphates.. Its function is as follows. Bidirectionally degrades single-stranded DNA into large acid-insoluble oligonucleotides, which are then degraded further into small acid-soluble oligonucleotides. In Geobacter sulfurreducens (strain ATCC 51573 / DSM 12127 / PCA), this protein is Exodeoxyribonuclease 7 small subunit.